Consider the following 581-residue polypeptide: Arginine--tRNA ligase (581 aa).

The short motif at proline 126–histidine 136 is the 'HIGH' region element.

It belongs to the class-I aminoacyl-tRNA synthetase family. In terms of assembly, monomer.

It localises to the cytoplasm. The catalysed reaction is tRNA(Arg) + L-arginine + ATP = L-arginyl-tRNA(Arg) + AMP + diphosphate. The protein is Arginine--tRNA ligase of Shewanella loihica (strain ATCC BAA-1088 / PV-4).